Here is an 883-residue protein sequence, read N- to C-terminus: Lethal(3)malignant brain tumor-like protein 3 (883 aa).

The tract at residues 1 to 64 is interaction with RBPJ. Required for transcription repressor activity on Notch target genes; it reads MTESASSTSG…VKKATATTTW (64 aa). The segment covering 146 to 156 has biased composition (basic and acidic residues); that stretch reads HAKDKDQKDER. The tract at residues 146 to 223 is disordered; the sequence is HAKDKDQKDE…RGDSAVLKQG (78 aa). 2 stretches are compositionally biased toward acidic residues: residues 157–166 and 185–194; these read DGGEDNDEED and DDGEERDDEM. MBT repeat units follow at residues 232 to 332, 340 to 439, and 448 to 543; these read WCWA…LRPP, FNWQ…LITP, and FSWD…LQAP. Residues 549-593 form a CCHHC-type; degenerate zinc finger; sequence LMEPSETGGCPTLGCRGVGHFKKSRYLGTQSGANCPYSEINLSKE. Residues 595-768 are disordered; sequence IFPDRLSGDT…TQQQAQTQQQ (174 aa). Over residues 616-662 the composition is skewed to basic and acidic residues; it reads KRMDTRESSSSPETREKHANNFKEDSEKKKENEVKTSAEAKVVREEP. Residue Lys638 forms a Glycyl lysine isopeptide (Lys-Gly) (interchain with G-Cter in SUMO2) linkage. Composition is skewed to low complexity over residues 663 to 742 and 749 to 768; these read TPSV…QQPQ and QPQQ…TQQQ. The 65-residue stretch at 811 to 875 folds into the SAM domain; that stretch reads WSTDEVSEFI…FNSILMFKAA (65 aa).

As to quaternary structure, interacts with RNF2. Interacts (via SAM domain) with SAMD1 (via SAM domain); the interaction mediates L3MBTL3 binding to chromatin. Interacts with RBPJ; the interaction is required for L3MBTL3 localization to chromatin and is impaired the Notch-derived peptides containing the intracellular domain (NICD). Interacts (via SAM domain) with KDM1A. Interacts with DCAF5. Interacts with DNMT1. Interacts with E2F1. Interacts with SOX2. Interacts with SFMBT1. Detected in hematopoietic progenitor cells in fetal liver. Detected in adult bone marrow, heart, brain, spleen, lung, liver, kidney and testis.

The protein localises to the nucleus. In terms of biological role, is a negative regulator of Notch target genes expression, required for RBPJ-mediated transcriptional repression. It recruits KDM1A to Notch-responsive elements and promotes KDM1A-mediated H3K4me demethylation. Involved in the regulation of ubiquitin-dependent degradation of a set of methylated non-histone proteins, including SOX2. It acts as an adapter recruiting the CRL4-DCAF5 E3 ubiquitin ligase complex to methylated target proteins. Also involved in the regulation of ubiquitin-dependent degradation of methylated DNMT1 and E2F1. Required for normal maturation of myeloid progenitor cells. The chain is Lethal(3)malignant brain tumor-like protein 3 from Mus musculus (Mouse).